A 374-amino-acid chain; its full sequence is Lipoyl synthase, mitochondrial (374 aa).

The transit peptide at 1–19 directs the protein to the mitochondrion; that stretch reads MHSRSALLYRFLRPASRCF. Residues Cys103, Cys108, Cys114, Cys134, Cys138, Cys141, and Ser350 each contribute to the [4Fe-4S] cluster site. The Radical SAM core domain occupies 119–339; that stretch reads ETGTATATIM…RLLGMEMGFR (221 aa).

This sequence belongs to the radical SAM superfamily. Lipoyl synthase family. [4Fe-4S] cluster is required as a cofactor. As to expression, expressed in leaves and flowers, but not in roots. Expressed in roots, rosette leaves, cauline leaves, stems, flowers and siliques.

The protein resides in the mitochondrion. It catalyses the reaction [[Fe-S] cluster scaffold protein carrying a second [4Fe-4S](2+) cluster] + N(6)-octanoyl-L-lysyl-[protein] + 2 oxidized [2Fe-2S]-[ferredoxin] + 2 S-adenosyl-L-methionine + 4 H(+) = [[Fe-S] cluster scaffold protein] + N(6)-[(R)-dihydrolipoyl]-L-lysyl-[protein] + 4 Fe(3+) + 2 hydrogen sulfide + 2 5'-deoxyadenosine + 2 L-methionine + 2 reduced [2Fe-2S]-[ferredoxin]. It functions in the pathway protein modification; protein lipoylation via endogenous pathway; protein N(6)-(lipoyl)lysine from octanoyl-[acyl-carrier-protein]: step 2/2. Functionally, catalyzes the radical-mediated insertion of two sulfur atoms into the C-6 and C-8 positions of the octanoyl moiety bound to the lipoyl domains of lipoate-dependent enzymes, thereby converting the octanoylated domains into lipoylated derivatives. Together with LIP2 is essential for mitochondrial protein lipoylation during seed development. Required for the lipoylation of mitochondrial pyruvate dehydrogenase component E2 proteins in leaves and roots. This Arabidopsis thaliana (Mouse-ear cress) protein is Lipoyl synthase, mitochondrial.